A 506-amino-acid chain; its full sequence is ATP synthase subunit alpha (506 aa).

Residue 171-178 (GDRQTGKT) coordinates ATP.

Belongs to the ATPase alpha/beta chains family. In terms of assembly, F-type ATPases have 2 components, CF(1) - the catalytic core - and CF(0) - the membrane proton channel. CF(1) has five subunits: alpha(3), beta(3), gamma(1), delta(1), epsilon(1). CF(0) has four main subunits: a(1), b(1), b'(1) and c(9-12).

The protein resides in the cellular thylakoid membrane. It carries out the reaction ATP + H2O + 4 H(+)(in) = ADP + phosphate + 5 H(+)(out). Its function is as follows. Produces ATP from ADP in the presence of a proton gradient across the membrane. The alpha chain is a regulatory subunit. In Trichormus variabilis (strain ATCC 29413 / PCC 7937) (Anabaena variabilis), this protein is ATP synthase subunit alpha.